We begin with the raw amino-acid sequence, 276 residues long: Dermonecrotic toxin LlSicTox-alphaIV1ii (276 aa).

Residue H5 is part of the active site. Positions 25 and 27 each coordinate Mg(2+). H41 (nucleophile) is an active-site residue. 2 cysteine pairs are disulfide-bonded: C45-C51 and C47-C193. Residue D85 coordinates Mg(2+).

Belongs to the arthropod phospholipase D family. Class II subfamily. It depends on Mg(2+) as a cofactor. In terms of tissue distribution, expressed by the venom gland.

Its subcellular location is the secreted. The enzyme catalyses an N-(acyl)-sphingosylphosphocholine = an N-(acyl)-sphingosyl-1,3-cyclic phosphate + choline. The catalysed reaction is an N-(acyl)-sphingosylphosphoethanolamine = an N-(acyl)-sphingosyl-1,3-cyclic phosphate + ethanolamine. It catalyses the reaction a 1-acyl-sn-glycero-3-phosphocholine = a 1-acyl-sn-glycero-2,3-cyclic phosphate + choline. It carries out the reaction a 1-acyl-sn-glycero-3-phosphoethanolamine = a 1-acyl-sn-glycero-2,3-cyclic phosphate + ethanolamine. Functionally, dermonecrotic toxins cleave the phosphodiester linkage between the phosphate and headgroup of certain phospholipids (sphingolipid and lysolipid substrates), forming an alcohol (often choline) and a cyclic phosphate. This toxin acts on sphingomyelin (SM). It may also act on ceramide phosphoethanolamine (CPE), lysophosphatidylcholine (LPC) and lysophosphatidylethanolamine (LPE), but not on lysophosphatidylserine (LPS), and lysophosphatidylglycerol (LPG). It acts by transphosphatidylation, releasing exclusively cyclic phosphate products as second products. Induces dermonecrosis, hemolysis, increased vascular permeability, edema, inflammatory response, and platelet aggregation. The chain is Dermonecrotic toxin LlSicTox-alphaIV1ii from Loxosceles laeta (South American recluse spider).